The sequence spans 54 residues: TATVDCSDYPKPACLLEYMPLCGSDNKTYDNKCSFCNAVVDSNGTLSLSHFGKC.

The Kazal-like domain maps to 4-54; sequence VDCSDYPKPACLLEYMPLCGSDNKTYDNKCSFCNAVVDSNGTLSLSHFGKC. 3 disulfide bridges follow: Cys-6-Cys-36, Cys-14-Cys-33, and Cys-22-Cys-54. Asn-43 is a glycosylation site (N-linked (GlcNAc...) asparagine).

Its subcellular location is the secreted. The chain is Ovomucoid from Opisthocomus hoazin (Hoatzin).